Here is a 451-residue protein sequence, read N- to C-terminus: Glucose-6-phosphate isomerase (451 aa).

E291 serves as the catalytic Proton donor. Catalysis depends on residues H312 and K426.

The protein belongs to the GPI family.

Its subcellular location is the cytoplasm. The enzyme catalyses alpha-D-glucose 6-phosphate = beta-D-fructose 6-phosphate. The protein operates within carbohydrate biosynthesis; gluconeogenesis. It functions in the pathway carbohydrate degradation; glycolysis; D-glyceraldehyde 3-phosphate and glycerone phosphate from D-glucose: step 2/4. Catalyzes the reversible isomerization of glucose-6-phosphate to fructose-6-phosphate. The sequence is that of Glucose-6-phosphate isomerase from Caldanaerobacter subterraneus subsp. tengcongensis (strain DSM 15242 / JCM 11007 / NBRC 100824 / MB4) (Thermoanaerobacter tengcongensis).